Reading from the N-terminus, the 147-residue chain is Small ribosomal subunit protein uS12 (147 aa).

This sequence belongs to the universal ribosomal protein uS12 family. In terms of assembly, part of the 30S ribosomal subunit.

With S4 and S5 plays an important role in translational accuracy. Located at the interface of the 30S and 50S subunits. In Ignicoccus hospitalis (strain KIN4/I / DSM 18386 / JCM 14125), this protein is Small ribosomal subunit protein uS12.